Consider the following 252-residue polypeptide: Ditrans,polycis-undecaprenyl-diphosphate synthase ((2E,6E)-farnesyl-diphosphate specific) (252 aa).

Residue Asp25 is part of the active site. Asp25 is a Mg(2+) binding site. Residues 26–29, Trp30, Arg38, His42, and 70–72 contribute to the substrate site; these read GNGR and SSE. Catalysis depends on Asn73, which acts as the Proton acceptor. Residues Trp74, Arg76, and Arg193 each contribute to the substrate site. Residue His198 coordinates Mg(2+). Residue 199–201 participates in substrate binding; the sequence is RIS. Mg(2+) is bound at residue Glu212.

It belongs to the UPP synthase family. Homodimer. It depends on Mg(2+) as a cofactor.

The catalysed reaction is 8 isopentenyl diphosphate + (2E,6E)-farnesyl diphosphate = di-trans,octa-cis-undecaprenyl diphosphate + 8 diphosphate. Its function is as follows. Catalyzes the sequential condensation of isopentenyl diphosphate (IPP) with (2E,6E)-farnesyl diphosphate (E,E-FPP) to yield (2Z,6Z,10Z,14Z,18Z,22Z,26Z,30Z,34E,38E)-undecaprenyl diphosphate (di-trans,octa-cis-UPP). UPP is the precursor of glycosyl carrier lipid in the biosynthesis of bacterial cell wall polysaccharide components such as peptidoglycan and lipopolysaccharide. The sequence is that of Ditrans,polycis-undecaprenyl-diphosphate synthase ((2E,6E)-farnesyl-diphosphate specific) from Salmonella paratyphi A (strain ATCC 9150 / SARB42).